Reading from the N-terminus, the 64-residue chain is Large ribosomal subunit protein uL29 (64 aa).

Belongs to the universal ribosomal protein uL29 family.

This Porphyromonas gingivalis (strain ATCC 33277 / DSM 20709 / CIP 103683 / JCM 12257 / NCTC 11834 / 2561) protein is Large ribosomal subunit protein uL29.